Consider the following 306-residue polypeptide: Acetaldehyde dehydrogenase 3 (306 aa).

The active-site Acyl-thioester intermediate is the Cys-131. Residues 162–170 (SVGPGTRKN) and Asn-273 each bind NAD(+).

The protein belongs to the acetaldehyde dehydrogenase family.

The catalysed reaction is acetaldehyde + NAD(+) + CoA = acetyl-CoA + NADH + H(+). The chain is Acetaldehyde dehydrogenase 3 from Burkholderia lata (strain ATCC 17760 / DSM 23089 / LMG 22485 / NCIMB 9086 / R18194 / 383).